A 378-amino-acid chain; its full sequence is Probable methyltransferase At1g29790 (378 aa).

Residues 1–6 (MAGFTM) lie on the Cytoplasmic side of the membrane. The chain crosses the membrane as a helical; Signal-anchor for type II membrane protein span at residues 7 to 29 (SLNLLLLVAMVATNILSLYHLSS). Over 30–378 (TTNFFQSTVK…TALLQKPVAR (349 aa)) the chain is Lumenal. Residues 67 to 87 (TTHQPDKSTSTSTSRAAVSSS) form a disordered region. Residues 74 to 87 (STSTSTSRAAVSSS) are compositionally biased toward low complexity. N-linked (GlcNAc...) asparagine glycosylation occurs at Asn-247.

It belongs to the methyltransferase superfamily.

It is found in the golgi apparatus membrane. This chain is Probable methyltransferase At1g29790, found in Arabidopsis thaliana (Mouse-ear cress).